A 349-amino-acid chain; its full sequence is Secretory carrier-associated membrane protein 3 (349 aa).

The interval 1-90 (MAQSRDTGNP…EPRNYGSYST (90 aa)) is disordered. Residues 1–168 (MAQSRDTGNP…PQEFQKTVST (168 aa)) lie on the Cytoplasmic side of the membrane. Ser32 carries the post-translational modification Phosphoserine. A Phosphothreonine modification is found at Thr37. 2 positions are modified to phosphotyrosine: Tyr41 and Tyr53. The segment covering 49–68 (PPPAYEPPAPAPAPLPPPSA) has biased composition (pro residues). Phosphoserine occurs at positions 74 and 78. A Phosphotyrosine modification is found at Tyr85. Ser87 carries the post-translational modification Phosphoserine. Transmembrane regions (helical) follow at residues 169–189 (MYYL…ACLA), 200–220 (GFGL…VCWY), 236–256 (FVFF…AIGI), and 277–297 (VAVL…LGIV). Residues 298–349 (MLKRIHSLYRQTGASFQKAQQEFAAGVFSNPAVRTAAANAAAGAAENAFRAP) are Cytoplasmic-facing. Residue Lys315 forms a Glycyl lysine isopeptide (Lys-Gly) (interchain with G-Cter in SUMO1) linkage.

The protein belongs to the SCAMP family. In terms of assembly, interacts with NEDD4 and NEDD4L and TSG101. Interacts with RNF126. Post-translationally, monoubiquitinated.

It localises to the membrane. Functionally, functions in post-Golgi recycling pathways. Acts as a recycling carrier to the cell surface. The protein is Secretory carrier-associated membrane protein 3 (Scamp3) of Mus musculus (Mouse).